Reading from the N-terminus, the 345-residue chain is Phenylalanine--tRNA ligase alpha subunit (345 aa).

Residue glutamate 259 participates in Mg(2+) binding.

Belongs to the class-II aminoacyl-tRNA synthetase family. Phe-tRNA synthetase alpha subunit type 1 subfamily. In terms of assembly, tetramer of two alpha and two beta subunits. The cofactor is Mg(2+).

Its subcellular location is the cytoplasm. The enzyme catalyses tRNA(Phe) + L-phenylalanine + ATP = L-phenylalanyl-tRNA(Phe) + AMP + diphosphate + H(+). The chain is Phenylalanine--tRNA ligase alpha subunit from Lactococcus lactis subsp. cremoris (strain MG1363).